Here is a 325-residue protein sequence, read N- to C-terminus: MNAFTQIDELVMPLPLEPQGYTIAPSKQSPRLLELTFARETVEAFVQAVAQWPVQALEYKSFLRFRVGEILDELCQGTLRPVLLNTILDRASGGMLITPVGLDDVSQAEDMVKFTTACAHLIGRSNYDAMSGQFYARFVVVNSDNSDSYLRQPHRVMELHNDGTFVNQITDYVLMLKIDEKNMEGGNSLLLHLDDWEQCDEFFRHPMARREMRWTAPPSKKVAEDVFHSVFDTDAEGRPTMRYIDQFVQPENYEEGIWLNALSDSLEGSEKKVSVPVGVGSFLLINNLFWLHGRDRFTPHEGLRRELMRQRGYVAFPKPLYQRGQ.

H160, D162, and H292 together coordinate Fe cation.

The protein belongs to the glutarate hydroxylase family. In terms of assembly, homotetramer. Fe(2+) serves as cofactor.

The enzyme catalyses glutarate + 2-oxoglutarate + O2 = (S)-2-hydroxyglutarate + succinate + CO2. It functions in the pathway amino-acid degradation. Its function is as follows. Acts as an alpha-ketoglutarate-dependent dioxygenase catalyzing hydroxylation of glutarate (GA) to L-2-hydroxyglutarate (L2HG). Functions in a L-lysine degradation pathway that proceeds via cadaverine, glutarate and L-2-hydroxyglutarate. This chain is Glutarate 2-hydroxylase, found in Pseudomonas putida (strain GB-1).